The chain runs to 248 residues: Mannose-binding protein C (248 aa).

Positions 1–20 are cleaved as a signal peptide; that stretch reads MSLFPSLPLLLLSMVAASYS. The region spanning 42 to 99 is the Collagen-like domain; that stretch reads GINGFPGKDGRDGTKGEKGEPGQGLRGLQGPPGKLGPPGNPGPSGSPGPKGQKGDPGK. A disordered region spans residues 43-113; the sequence is INGFPGKDGR…DSSLAASERK (71 aa). Residue Pro47 is modified to 4-hydroxyproline. A compositionally biased stretch (basic and acidic residues) spans 49 to 61; sequence KDGRDGTKGEKGE. Residues Pro73, Pro79, Pro82, and Pro88 each carry the 4-hydroxyproline modification. Positions 75–87 are enriched in pro residues; that stretch reads KLGPPGNPGPSGS. The span at 93-102 shows a compositional bias: basic and acidic residues; it reads QKGDPGKSPD. A coiled-coil region spans residues 112-130; that stretch reads RKALQTEMARIKKWLTFSL. The C-type lectin domain maps to 134–245; the sequence is VGNKFFLTNG…CSTSHLAVCE (112 aa). 2 cysteine pairs are disulfide-bonded: Cys155–Cys244 and Cys222–Cys236.

Oligomeric complex of 3 or more homotrimers. Interacts with MASP1 and MASP2. Interacts with MEP1A and MEP1B and may inhibit their catalytic activity. In terms of processing, hydroxylation on proline residues within the sequence motif, GXPG, is most likely to be 4-hydroxy as this fits the requirement for 4-hydroxylation in vertebrates.

Its subcellular location is the secreted. Functionally, calcium-dependent lectin involved in innate immune defense. Binds mannose, fucose and N-acetylglucosamine on different microorganisms and activates the lectin complement pathway. Binds to late apoptotic cells, as well as to apoptotic blebs and to necrotic cells, but not to early apoptotic cells, facilitating their uptake by macrophages. This is Mannose-binding protein C (MBL2) from Gorilla gorilla gorilla (Western lowland gorilla).